The chain runs to 1449 residues: MKKLFVVLVVMPLIYGDNFPCSKLTNRTIGNHWNLIETFLLNYSSRLSPNSDVVLGDYFPTVQPWFNCIHNNSNDLYVTLENLKALYWDYATENSTWNHKQRLNVVVNGYPYSITVTTTRNFNSAEGAIICICKGSPPTTTTESSLTCNWGSECRLNHKFPICPSNSEANCGNMLYGLQWFADAVVAYLHGASYRISFENQWSGTVTLGDMRATTLETAGTLVDLWWFNPVYDVSYYRVNNKNGTTVVSNCTDQCASYVANVFTTQPGGFIPSDFSFNNWFLLTNSSTLVSGKLVTKQPLLVNCLWPVPSFEEAASTFCFEGAGFDQCNGAVLNNTVDVIRFNLNFTTNVQSGKGATVFSLNTTGGVTLEISCYNDTVSDSSFSSYGEIPFGVTDGPRYCYVLYNGTALKYLGTLPPSVKEIAISKWGHFYINGYNFFSTFPIDCISFNLTTGDSDVFWTIAYTSYTEALVQVENTAITKVTYCNSYVNNIKCSQLTANLNNGFYPVSSSEVGFVNKSVVLLPTFYTHTIVNITIGLGMKRSGYGQPIASTLSNITLPMQDNNIDVYCIRSDQFSVYVHSTCKSALWDNVFKRNCTDVLDATAVIKTGTCPFSFDKLNNYLTFNKFCLSLSPVGANCKFDVAARTRANDQVVRSLYVIYEEGDNIVGVPSDNSGLHDLSVLHLDSCTDYNIYGRSGVGIIRQTNRTLLSGLYYTSLSGDLLGFKNVSDGVIYSVTPCDVSAQAAVIDGTIVGAITSINSELLGLTHWTTTPNFYYYSIYNYTNDMTRGTAIDSNDVDCEPVITYSNIGVCKNGALVFINVTHSDGDVQPISTGNVTIPTNFTISVQVEYIQVYTTPVSIDCSRYVCNGNPRCNKLLTQYVSACQTIEQALAVGARLENMEVDSMLFVSENALKLASVEAFNSSETLDPIYKEWPNIGGSWLEGLKYILPSDNSKRKYRSAIEDLLFSKVVTSGLGTVDEDYKRCTGGYDIADLVCAQYYNGIMVLPGVANADKMTMYTASLAGGITLGALGGGAVAIPFAVAVQARLNYVALQTDVLNKNQQILASAFNQAIGNITQSFGKVNDAIHQTSRGLATVAKALAKVQDVVNTQGQALSHLTVQLQNNFQAISSSISDIYNRLDELSADAHVDRLITGRLTALNAFVSQTLTRQAEVRASRQLAKDKVNECVRSQSQRFGFCGNGTHLFSLANAAPNGMIFFHAVLLPTAYETVTAWAGICALDGDRTFGLVVKDVQLTLFRNLDDKFYLTPRTMYQPRVATSSDFVQIEGCDVLFVNATLSDLPSIIPDYIDINQTVQDILENFRPNWTVPELTFDIFNATYLNLTGEIDDLEFRSEKLHNTTVELAILIDNINNTLVNLEWLNRIETYVKWPWYVWLLIGLVVIFCIPLLLFCCCSTGCCGCIGCLGSCCHSICSRRQFENYEPIEKVHIH.

A signal peptide spans 1–28; sequence MKKLFVVLVVMPLIYGDNFPCSKLTNRT. S1 regions lie at residues 17–776 and 29–776; these read DNFP…FYYY and IGNH…FYYY. At 29–1390 the chain is on the virion surface side; that stretch reads IGNHWNLIET…NRIETYVKWP (1362 aa). The tract at residues 657-801 is interaction with host ANPEP; it reads VIYEEGDNIV…DSNDVDCEPV (145 aa). Residues 777–1449 are S2; sequence SIYNYTNDMT…YEPIEKVHIH (673 aa). Residues 1022-1043 form a fusion peptide region; the sequence is AGGITLGALGGGAVAIPFAVAV. The segment at 1037 to 1156 is heptad repeat 1 (HR1); the sequence is IPFAVAVQAR…HVDRLITGRL (120 aa). Coiled coils occupy residues 1104–1148 and 1338–1380; these read QDVV…DAHV and TYLN…LEWL. The tract at residues 1305–1402 is heptad repeat 2 (HR2); the sequence is PDYIDINQTV…VWLLIGLVVI (98 aa). The helical transmembrane segment at 1391-1410 threads the bilayer; that stretch reads WYVWLLIGLVVIFCIPLLLF. Residues 1411–1449 lie on the Intravirion side of the membrane; that stretch reads CCCSTGCCGCIGCLGSCCHSICSRRQFENYEPIEKVHIH. A KxHxx motif is present at residues 1445–1449; it reads KVHIH.

This sequence belongs to the alphacoronaviruses spike protein family. Homotrimer. During virus morphogenesis, found in a complex with M and HE proteins. Interacts with host ANPEP.

The protein localises to the virion membrane. It is found in the host endoplasmic reticulum-Golgi intermediate compartment membrane. Its function is as follows. S1 region attaches the virion to the cell membrane by interacting with host ANPEP/aminopeptidase N, initiating the infection. Binding to the receptor probably induces conformational changes in the S glycoprotein unmasking the fusion peptide of S2 region and activating membranes fusion. S2 region belongs to the class I viral fusion protein. Under the current model, the protein has at least 3 conformational states: pre-fusion native state, pre-hairpin intermediate state, and post-fusion hairpin state. During viral and target cell membrane fusion, the coiled coil regions (heptad repeats) regions assume a trimer-of-hairpins structure, positioning the fusion peptide in close proximity to the C-terminal region of the ectodomain. The formation of this structure appears to drive apposition and subsequent fusion of viral and target cell membranes. In Porcine transmissible gastroenteritis coronavirus (strain FS772/70) (TGEV), this protein is Spike glycoprotein.